A 77-amino-acid chain; its full sequence is Ubiquitin-like protein NEDD8 (77 aa).

Residues valine 70–alanine 72 form an interaction with uba-3 region. A Glycyl lysine isopeptide (Gly-Lys) (interchain with K-? in acceptor proteins) cross-link involves residue glycine 76. A propeptide is located at residue phenylalanine 77.

Belongs to the ubiquitin family. As to quaternary structure, interacts with dcn-1. Covalently attached to cullins. May interact with atx-3. Post-translationally, cleavage of precursor form is necessary for function.

The protein localises to the nucleus. Its subcellular location is the cytoplasm. Functionally, ubiquitin-like protein which plays an important role in cell cycle control and embryogenesis. Covalent attachment to its substrates requires prior activation by the E1 complex uba-3-ula-1 and linkage to the E2 enzyme ubc-12. Attachment of ned-8 to cullins activates their associated E3 ubiquitin ligase activity, and thus promotes polyubiquitination and proteasomal degradation of cyclins and other regulatory proteins. This Caenorhabditis elegans protein is Ubiquitin-like protein NEDD8 (ned-8).